The sequence spans 958 residues: Protein translocase subunit SecA (958 aa).

ATP contacts are provided by residues Gln-86, 104-108 (GEGKT), and Asp-494. 2 disordered regions span residues 863–883 (AAATGESAPAEPETDDEAEKT) and 902–937 (QPISHAEGKVPANKRPKSEELHSPWADGRTFPGTGK). 4 residues coordinate Zn(2+): Cys-941, Cys-943, Cys-952, and His-953.

Belongs to the SecA family. Monomer and homodimer. Part of the essential Sec protein translocation apparatus which comprises SecA, SecYEG and auxiliary proteins SecDF. Other proteins may also be involved. Requires Zn(2+) as cofactor.

It localises to the cell membrane. Its subcellular location is the cytoplasm. It catalyses the reaction ATP + H2O + cellular proteinSide 1 = ADP + phosphate + cellular proteinSide 2.. Its function is as follows. Part of the Sec protein translocase complex. Interacts with the SecYEG preprotein conducting channel. Has a central role in coupling the hydrolysis of ATP to the transfer of proteins into and across the cell membrane, serving as an ATP-driven molecular motor driving the stepwise translocation of polypeptide chains across the membrane. This is Protein translocase subunit SecA from Bifidobacterium adolescentis (strain ATCC 15703 / DSM 20083 / NCTC 11814 / E194a).